A 360-amino-acid chain; its full sequence is Phospho-N-acetylmuramoyl-pentapeptide-transferase (360 aa).

Helical transmembrane passes span 21 to 41 (YITF…LWIG), 73 to 93 (TMGG…WADL), 98 to 118 (IWFV…DDYW), 132 to 152 (WKYF…YAVG), 168 to 188 (VMPQ…VGTS), 199 to 219 (GLAI…AWAT), 236 to 256 (AGEL…FLWY), 263 to 283 (VFMG…IAVL), 288 to 308 (LLLV…ILQV), and 338 to 358 (VIVR…VTLK).

This sequence belongs to the glycosyltransferase 4 family. MraY subfamily. Mg(2+) serves as cofactor.

Its subcellular location is the cell inner membrane. It carries out the reaction UDP-N-acetyl-alpha-D-muramoyl-L-alanyl-gamma-D-glutamyl-meso-2,6-diaminopimeloyl-D-alanyl-D-alanine + di-trans,octa-cis-undecaprenyl phosphate = di-trans,octa-cis-undecaprenyl diphospho-N-acetyl-alpha-D-muramoyl-L-alanyl-D-glutamyl-meso-2,6-diaminopimeloyl-D-alanyl-D-alanine + UMP. It participates in cell wall biogenesis; peptidoglycan biosynthesis. Its function is as follows. Catalyzes the initial step of the lipid cycle reactions in the biosynthesis of the cell wall peptidoglycan: transfers peptidoglycan precursor phospho-MurNAc-pentapeptide from UDP-MurNAc-pentapeptide onto the lipid carrier undecaprenyl phosphate, yielding undecaprenyl-pyrophosphoryl-MurNAc-pentapeptide, known as lipid I. The protein is Phospho-N-acetylmuramoyl-pentapeptide-transferase of Actinobacillus pleuropneumoniae serotype 5b (strain L20).